The sequence spans 1021 residues: Inversin (1021 aa).

16 ANK repeats span residues 7–36, 40–69, 73–102, 106–137, 141–170, 174–206, 213–243, 247–276, 281–310, 314–343, 349–378, 382–411, 415–444, 448–477, 481–510, and 516–546; these read QNPSQVHAAAVNGDKNTLHKLITESALRDS, FGRTPLMYCVLADRLDCAEVLLKAGAGINK, SQRTALHLAAQKGNVRFMKLLLSRHADWRL, EEMTPLHLASRHSSSKPLSLLLKHMAPGEVDT, NKQTALHWSAFYNHPEHVKLLIKHDSNIGI, EGKIPLHWAAHNKHPNATRTVRCILEAAPTESL, EGRTPLHFAVADGNEAVVEVLTSYEGCSVTA, LFRTPLHWAALLGHAKIVHLLLERNKSGMI, QGATPLHYGAQSNFADTVAVFLKHHSVRDE, EGRTAFMWAAGKGSNDVIKIMLDLKKDIDI, YGGTALHAAALSGHVSTVRLLLEQGGMVDP, MKHTPLFRACEMGHRDVILTLIKGGARVDL, DGHSALHWAALGGNAEVCEVLMENGISPNL, AGRTPLQCAAYAGYINCMALLIQHDADPNI, EGRTALHWSCNNGYLDAVKLLLGCGAFPNH, and ERYTPLDYALLGEHQELTQFLLEHGALSIAA. Positions 483–491 match the D-box 1 motif; that stretch reads RTALHWSCN. Residues 548–577 form the IQ 1 domain; the sequence is QDIAASSIQALYKGYKVRRAFRERKKLLMR. Composition is skewed to basic and acidic residues over residues 579–598 and 653–669; these read EQLRKDAAKKREEERRREAE and SRREKPSRAERRTREPE. Disordered stretches follow at residues 579-602, 632-691, and 704-868; these read EQLRKDAAKKREEERRREAEQQLS, KDSV…KKCP, and GPDT…GTCS. Residues 722–731 are compositionally biased toward low complexity; sequence PAGSSRPGSA. 2 stretches are compositionally biased toward polar residues: residues 759-781 and 791-802; these read GAHSKNASQDTPQHNETQTTSKG and TGSQPSNNTSVT. Residues 803–866 are compositionally biased toward basic and acidic residues; the sequence is RQKEKRQEKE…KEKEKKKDGT (64 aa). A D-box 2 motif is present at residues 862 to 870; the sequence is KKDGTCSKN. The IQ 2 domain maps to 869–898; it reads KNQAAVVIQRAWRRSCVRGRIRKVLCRSLK.

Binds calmodulin via its IQ domains.

The protein localises to the cytoplasm. Its subcellular location is the cytoskeleton. Required for normal renal development and establishment of left-right axis. Probably acts as a molecular switch between different Wnt signaling pathways. Inhibits the canonical Wnt pathway by targeting cytoplasmic disheveled for degradation by the ubiquitin-proteasome. This suggests that it is required in renal development to oppose the repression of terminal differentiation of tubular epithelial cells by Wnt signaling. The polypeptide is Inversin (invs) (Danio rerio (Zebrafish)).